The primary structure comprises 832 residues: Protein PPP4R3C (832 aa).

Positions 708-832 (RTQEGEAVMP…SPKKKPHLSS (125 aa)) are disordered. 2 stretches are compositionally biased toward basic and acidic residues: residues 725-735 (FTETKRTHQEG) and 749-765 (METKRNQEHEGKVDSPK). Low complexity predominate over residues 769–779 (SGDFKFSSSYS). Residues 801–820 (PDDEEEKEEDEEEKEEDKED) show a composition bias toward acidic residues.

Belongs to the SMEK family.

The sequence is that of Protein PPP4R3C from Homo sapiens (Human).